The sequence spans 356 residues: 3-dehydroquinate synthase (356 aa).

Residues 69-74 (DGEQYK), 103-107 (GVVGD), 127-128 (TT), lysine 140, and lysine 149 contribute to the NAD(+) site. Residues glutamate 182, histidine 245, and histidine 262 each coordinate Zn(2+).

The protein belongs to the sugar phosphate cyclases superfamily. Dehydroquinate synthase family. The cofactor is Co(2+). Zn(2+) serves as cofactor. It depends on NAD(+) as a cofactor.

Its subcellular location is the cytoplasm. The catalysed reaction is 7-phospho-2-dehydro-3-deoxy-D-arabino-heptonate = 3-dehydroquinate + phosphate. The protein operates within metabolic intermediate biosynthesis; chorismate biosynthesis; chorismate from D-erythrose 4-phosphate and phosphoenolpyruvate: step 2/7. Catalyzes the conversion of 3-deoxy-D-arabino-heptulosonate 7-phosphate (DAHP) to dehydroquinate (DHQ). This is 3-dehydroquinate synthase from Pseudoalteromonas translucida (strain TAC 125).